Reading from the N-terminus, the 93-residue chain is Vacuolar ATPase assembly integral membrane protein VMA21 (93 aa).

The Cytoplasmic portion of the chain corresponds to 1-21; the sequence is MSNRVSTGKMAMAPQESVQPA. The chain crosses the membrane as a helical span at residues 22–42; it reads VLYKLVLFALLMAVVPIGTYF. Residues 43 to 54 are Lumenal-facing; it reads STLNYLWDGSTT. A helical transmembrane segment spans residues 55–75; it reads FAAISAIAAANLILVGYVVVA. The Cytoplasmic portion of the chain corresponds to 76-93; the sequence is FREDAASRTGPLPEKKTS. The Prevents secretion from ER motif lies at 90 to 93; that stretch reads KKTS.

This sequence belongs to the VMA21 family.

The protein localises to the endoplasmic reticulum membrane. Its subcellular location is the endoplasmic reticulum-Golgi intermediate compartment membrane. It is found in the cytoplasmic vesicle. It localises to the COPII-coated vesicle membrane. Functionally, required for the assembly of the V0 complex of the vacuolar ATPase (V-ATPase) in the endoplasmic reticulum. This is Vacuolar ATPase assembly integral membrane protein VMA21 from Cryptococcus neoformans var. neoformans serotype D (strain JEC21 / ATCC MYA-565) (Filobasidiella neoformans).